The primary structure comprises 876 residues: MEMKPKYNPREVESGRYDQWVNSGYFKAKDDQSKETYTIVIPPPNVTGKLHLGHAWDTTLQDILTRMKRMQGYDTLYLPGMDHAGIATQAKVEAKLNEQGLSRHDLGREKFLEQAWDWKEEYANFIRQQWAKLGLGLDYSRERFTLDEGLSKAVKKVFVDMYNKGLIYRGEYIINWDPIARTALSDIEVIHEDVQGKFYHFKYPYADGNGYIEIATTRPETMLGDTAIVVNPNDERYKDVIGKTVILPIVGRELPILADEYVDIEFGSGAMKVTPAHDPNDFEIGNRHDLERIIVMDESGKMNDKADKYQGMDRFDCREQLVKDLEAENLVIKIEEHEHSVGHSERSGAVVEPYLSTQWFVKMKPLAEQALNNQKTDDRIDFVPARFEKTFNRWMEEIRDWTISRQLWWGHQIPAWYHKETGEIFVGEHEPEDIENWVQDEDVLDTWFSSALWPFSTLGWPDVEADDFQRYFPTNALVTGYDIIFFWVARMIFQGLEFTGKRPFNDVLLHGLVRAEDGRKMSKSLGNGVDPMDVIDEYGADSLRYFLATGSSPGHDLRYSTEKVESIWNFINKIWNAARFSIMNIGEDFTVEQVDLSGDLSLADKWILTRLNETIENVTELSDKYEFGEVGRTLYNFIWDEFCDWYIEMSKIPMNGEDEAQKQITRSVLTYVLDNTMRMLHPFMPFVTEQIWQNLPHEGETIVKAAWPKVNEALVFDDSKETMQQLVEIIKSVRQSRLEVDTPLSKAIPIFIKAKDENIKETLLNNSNYIDRFCHPSELTIDTTIEIPEKAMTSVTTAGEVVLPLEGLIDMDKEIARLENELLKWEKELDRVNKKLANENFVNKAPEKVINEEREKKQTYQEKYDGVKLRINQLKA.

The 'HIGH' region signature appears at 44-54 (PNVTGKLHLGH). A 'KMSKS' region motif is present at residues 520–524 (KMSKS). Lys-523 serves as a coordination point for ATP. Positions 806-876 (EGLIDMDKEI…VKLRINQLKA (71 aa)) form a coiled coil.

Belongs to the class-I aminoacyl-tRNA synthetase family. ValS type 1 subfamily. In terms of assembly, monomer.

It localises to the cytoplasm. It catalyses the reaction tRNA(Val) + L-valine + ATP = L-valyl-tRNA(Val) + AMP + diphosphate. Catalyzes the attachment of valine to tRNA(Val). As ValRS can inadvertently accommodate and process structurally similar amino acids such as threonine, to avoid such errors, it has a 'posttransfer' editing activity that hydrolyzes mischarged Thr-tRNA(Val) in a tRNA-dependent manner. The sequence is that of Valine--tRNA ligase from Staphylococcus saprophyticus subsp. saprophyticus (strain ATCC 15305 / DSM 20229 / NCIMB 8711 / NCTC 7292 / S-41).